Consider the following 444-residue polypeptide: Putative F-box protein At1g64540 (444 aa).

The 47-residue stretch at arginine 4–glutamate 50 folds into the F-box domain.

This is Putative F-box protein At1g64540 from Arabidopsis thaliana (Mouse-ear cress).